Consider the following 1429-residue polypeptide: DNA-directed RNA polymerase subunit beta' (1429 aa).

Zn(2+) is bound by residues C68, C70, C83, and C86. Positions 459, 461, and 463 each coordinate Mg(2+). Residues C805, C879, C886, and C889 each coordinate Zn(2+). The segment at 1407–1429 (ESFPLLGGDGEPASTTSSTTEGE) is disordered. Positions 1419–1429 (ASTTSSTTEGE) are enriched in polar residues.

The protein belongs to the RNA polymerase beta' chain family. As to quaternary structure, the RNAP catalytic core consists of 2 alpha, 1 beta, 1 beta' and 1 omega subunit. When a sigma factor is associated with the core the holoenzyme is formed, which can initiate transcription. Mg(2+) serves as cofactor. The cofactor is Zn(2+).

It carries out the reaction RNA(n) + a ribonucleoside 5'-triphosphate = RNA(n+1) + diphosphate. In terms of biological role, DNA-dependent RNA polymerase catalyzes the transcription of DNA into RNA using the four ribonucleoside triphosphates as substrates. The protein is DNA-directed RNA polymerase subunit beta' of Rhodopirellula baltica (strain DSM 10527 / NCIMB 13988 / SH1).